A 330-amino-acid polypeptide reads, in one-letter code: Type II methyltransferase M.HaeIII (330 aa).

Residues 1–327 (MNLISLFSGA…KTIKSALEIC (327 aa)) enclose the SAM-dependent MTase C5-type domain. Residues E29 and 50 to 51 (DI) contribute to the ATP site. The active site involves C71. An ATP-binding site is contributed by N260.

It belongs to the class I-like SAM-binding methyltransferase superfamily. C5-methyltransferase family. In terms of assembly, monomer.

The enzyme catalyses a 2'-deoxycytidine in DNA + S-adenosyl-L-methionine = a 5-methyl-2'-deoxycytidine in DNA + S-adenosyl-L-homocysteine + H(+). Functionally, a methylase, recognizes the double-stranded sequence 5'-GGCC-3', methylates C-3 on both strands, and protects the DNA from cleavage by the HaeIII endonuclease. This chain is Type II methyltransferase M.HaeIII (haeIIIM), found in Haemophilus aegyptius.